The primary structure comprises 383 residues: F-box/kelch-repeat protein At2g29830 (383 aa).

The tract at residues methionine 1–glutamine 21 is disordered. The segment covering proline 11 to glutamine 21 has biased composition (acidic residues). Residues leucine 27–arginine 73 enclose the F-box domain. Kelch repeat units follow at residues lysine 130–glycine 178, arginine 179–tyrosine 224, valine 226–aspartate 272, leucine 274–threonine 317, and lysine 324–proline 370.

The chain is F-box/kelch-repeat protein At2g29830 from Arabidopsis thaliana (Mouse-ear cress).